Reading from the N-terminus, the 2439-residue chain is MLDFPRFSLFLFLLFSSFLFSSFVHAATVFSSSLKTCQSQCEERNLAYPLDSGEVHWTGLAEFNYTTRISSCKHGCEDVDERESKCNVKCAEEGIVTNSCKQGCRAVLVSFLAQAQALLIQTRVNMEVLETAMKLKWEFPETLAEELKEIANADIFWFSQTRPLNGILGWRWTSLPQSSFRNSSLVSEVHVPFEHGEHVEVRLALSYRNQVLVSRTTTYHLPLSKAGTTLEVIGQLQLSDDRVAVCYRTNQPTPKFKLTVMTMDDNTINTEESISRCHLFSNLPRDNCCKASISAIDEHGATTAFVEIKLDFFVNQVEIELVSAASSSRIIFSNGTHLLENEELAQYALGDSATVIPFPLPTDDTITAIAGITDTIIAIGSSKGSLWTFQMSANQTDEDQPSSVIQLKTVGEMDTKITQIEIDHIQRTLYAVQHDKGILRCKLRTMESEESPTCVLIVNNDALNPPKEITLDPVNGHIYSLNVDNKVYRTEMIAFNATGIETVASLQYLKDMSPSNGIFFDVSKFLLYSALQNGSMMTLNPVTDQAHIFKDSGYTDVQNFRIKSDLIYWMKKKCGKTDADENCIFTENLQRSEEDIPNKFTYSSALMSYSFLEEILLKPRIVAVSSIALLTSDKTGRVSWDEANTLPFQAQGSSWRNFTYFLKITAPDITDFEAVEMYTSSTDVKIDVTPGNQYNAQVQVCSDDFCSTPSSTSNTALPDLGGGVPFVFTKKKADDIISIDMLGNLVITDDSVKAVERMQNPHVLDNTTKTVYLAGDHSMGIFKKDLDDATGSPKPFKDGLFVEMMSIMPSRSMILIASSYKITSYRLPTTFDFEYYSCEEPLEDCAEVMGISSDDSTGMVYFLTQSRNGTVILWESDPENRAPRDIATAPSIVPFRRFLIIHDKMILVTKNNHIVQTDKSLKVVNVATELERVDRILPLRYAAISHKIEFTDEIKFMEGSKTDLQWTLSPPLEAGTVIFKVSFFREKMGGQDAPITTIQSDTNFTIPPEVLKEWSSAQRFDVSIQAITPWATAVLNRTGLTAPVKPPTPPTQLKIFATQQKTVDGPRALISFFWGPPLEWNGTPYQYIVNCTKDDGKVITIDSSELKPLVKLFAIDSTNSLIIINDLAHEEPRRETRQVTQPVKLDYQAMAFIGEDLYTVRKEGESAQPFLVQIDTNHIDNTVHKVSIGGDVTRIDAMTSDWVGNRLIFVAGTNLYQLSLEPFLSTSLLNPHKLITLSAATDAKQLAYDPFMNTAYLLTKNGSLFALDMNKNTEANLALTVPCLASQTVTWMMTEFAWNRASSPKIYALTWNGLINVDLAEDFQCNEVRIDWSKFGEKGLKAISSFAIADKLFAFVTSSEMLIYGRDTVTPITIANPPLKQILAVSQSSQPYPERSCFELPSSKGIVFSIVNEGKTGALLEVTKSSSSSACLDVSMPQTQYEIYFTRKNTDKVKHVRSFSDRIHVENGILDKETDYDVTVTWLNRYSPASGVSSSRSFRTGFGYPSAPRDPHAIPVTPDTVYLYWSLPETLNAPISEIKYKISQQAAGISVPTSIAVIPLSETVSSNISSDTTACLINPCRVKIANLRPSNEYKFWVTATHISHLDAATILKDDDAVSSEAVARTLDVPGTLRPDNVTGSSLLLRWNGLEPEHRPTSIAIQYRESGGANNEWQSPTNASFEPDVATELVPVTNLLSATTYDYRFVATYTGTYTIDGKVLAFKEDYLQLIQQARTKAGVPTAPQSVEAKIDTEGWIVTWKEPMSDGGSPITSYAVETRINKTAEWEIAERGLDGWKTWWRPGKSETSSSMSYSSEVSEFRIRAANIEGFGAYAYTEEKKEEKEEEKGGILPYFLGISIILLLAAMILVGCFWLKSRRRQQMKKREAEDERNCIRLDVVANMNFTNSRQTLSPEYESEIRNLPIVDYNDVEIVRHISDCSYGSVHEGIAEEVPLSWEKQVKVAVKQLRPKSANHDFDRMMFMKEAILLNNLDHNIVKELGVCVSPGQGLILLEYMEGGNLLNFLRESAPSEMQASELSTRDLLAISVDIARGMNYLERLPHVHKNLSARKCLLSGRPGVAKLEMGMPRALSKGEINRVDLESMQSVKWMAPEVFKDLMFTSKSDVWAYGVLLYEIFSFGEEPYGSMDSRRVITDVRDGNLTLPVPPYCPSKKICKVMKMCLISDPNKRASFATILKIFETCRDDQQSQDDKRIHFNEGSDNINFNASQDSTSSREPPSPSHRIREFTQISGDLEPPSPSPLNQSFGGFEHPYEGDRPATMWNASGARNSAKNSIGRSMKKDKFRNPIHSMDDLVARSQRPLSIHSEDTESTDFGGATSSMHSPSSSNRTNHYELPMSRLSAAPPIGIVNNAFESSNNSLNMSRSWTGLAGEVNPNPAGASSSGTLPHHANSMVHLRAPTGQPPTRVNRNSSGGTCRSVSQV.

The signal sequence occupies residues 1–26; the sequence is MLDFPRFSLFLFLLFSSFLFSSFVHA. Over 27-1851 the chain is Extracellular; the sequence is ATVFSSSLKT…EEEKGGILPY (1825 aa). 13 N-linked (GlcNAc...) asparagine glycosylation sites follow: Asn64, Asn182, Asn334, Asn394, Asn496, Asn533, Asn657, Asn766, Asn868, Asn1003, Asn1036, Asn1090, and Asn1261. The region spanning 618–720 is the Fibronectin type-III 1 domain; sequence KPRIVAVSSI…STSNTALPDL (103 aa). 4 Fibronectin type-III domains span residues 1403 to 1503, 1507 to 1628, 1629 to 1732, and 1738 to 1843; these read SKGI…TGFG, APRD…TLDV, PGTL…IQQA, and VPTA…EKEE. N-linked (GlcNAc...) asparagine glycosylation is found at Asn1567, Asn1636, Asn1677, and Asn1779. Residues 1852-1872 form a helical membrane-spanning segment; sequence FLGISIILLLAAMILVGCFWL. Residues 1873–2439 are Cytoplasmic-facing; that stretch reads KSRRRQQMKK…GGTCRSVSQV (567 aa). The region spanning 1928 to 2199 is the Protein kinase domain; it reads VEIVRHISDC…ATILKIFETC (272 aa). ATP contacts are provided by residues 1934 to 1942 and Lys1963; that span reads ISDCSYGSV. 3 disordered regions span residues 2214–2277, 2315–2348, and 2412–2439; these read NEGS…RPAT, SQRP…NRTN, and HLRA…VSQV. 3 stretches are compositionally biased toward polar residues: residues 2216–2233, 2334–2347, and 2420–2439; these read GSDN…SSRE, ATSS…SNRT, and PPTR…VSQV.

The protein localises to the membrane. In terms of biological role, involved in larval development and locomotion. In Caenorhabditis briggsae, this protein is Protein roller-3.